We begin with the raw amino-acid sequence, 175 residues long: Methylated-DNA--protein-cysteine methyltransferase (175 aa).

The Nucleophile; methyl group acceptor role is filled by Cys-142.

It belongs to the MGMT family.

It is found in the cytoplasm. The enzyme catalyses a 6-O-methyl-2'-deoxyguanosine in DNA + L-cysteinyl-[protein] = S-methyl-L-cysteinyl-[protein] + a 2'-deoxyguanosine in DNA. The catalysed reaction is a 4-O-methyl-thymidine in DNA + L-cysteinyl-[protein] = a thymidine in DNA + S-methyl-L-cysteinyl-[protein]. Functionally, involved in the cellular defense against the biological effects of O6-methylguanine (O6-MeG) and O4-methylthymine (O4-MeT) in DNA. Repairs the methylated nucleobase in DNA by stoichiometrically transferring the methyl group to a cysteine residue in the enzyme. This is a suicide reaction: the enzyme is irreversibly inactivated. The sequence is that of Methylated-DNA--protein-cysteine methyltransferase from Thermococcus sibiricus (strain DSM 12597 / MM 739).